Consider the following 205-residue polypeptide: Thymidine kinase (205 aa).

Residues 9–16 and 88–91 contribute to the ATP site; these read SAMNAGKT and DECH. E89 functions as the Proton acceptor in the catalytic mechanism. 4 residues coordinate Zn(2+): C146, C148, C183, and H186.

The protein belongs to the thymidine kinase family. In terms of assembly, homotetramer.

The protein resides in the cytoplasm. The enzyme catalyses thymidine + ATP = dTMP + ADP + H(+). This Blochmanniella pennsylvanica (strain BPEN) protein is Thymidine kinase.